We begin with the raw amino-acid sequence, 372 residues long: L-selectin (372 aa).

An N-terminal signal peptide occupies residues 1–28 (MIFPWKCQSTQRDLWNIFKLWGWTMLCC). Residues 29-38 (DFLAHHGTDC) constitute a propeptide that is removed on maturation. The Extracellular portion of the chain corresponds to 39-332 (WTYHYSEKPM…FSMIKEGDYN (294 aa)). The C-type lectin domain occupies 55 to 155 (RFCRDNYTDL…ACHKLKAALC (101 aa)). 9 disulfide bridges follow: Cys57–Cys155, Cys128–Cys147, Cys160–Cys171, Cys165–Cys180, Cys182–Cys191, Cys197–Cys241, Cys227–Cys254, Cys259–Cys303, and Cys289–Cys316. 2 N-linked (GlcNAc...) asparagine glycosylation sites follow: Asn60 and Asn104. The Ca(2+) site is built by Glu118, Asn120, Glu126, Asn143, and Asp144. The 37-residue stretch at 156 to 192 (YTASCQPWSCSGHGECVEIINNYTCNCDVGYYGPQCQ) folds into the EGF-like domain. N-linked (GlcNAc...) asparagine glycosylation occurs at Asn177. Sushi domains follow at residues 195 to 256 (IQCE…TCQV) and 257 to 318 (IQCE…ICQK). Asn232, Asn246, and Asn271 each carry an N-linked (GlcNAc...) asparagine glycan. Residues 333–355 (PLFIPVAVMVTAFSGLAFIIWLA) form a helical membrane-spanning segment. The Cytoplasmic portion of the chain corresponds to 356–372 (RRLKKGKKSKRSMNDPY).

The protein belongs to the selectin/LECAM family. As to quaternary structure, interaction with SELPLG/PSGL1 and PODXL2 is required for promoting recruitment and rolling of leukocytes. This interaction is dependent on the sialyl Lewis X glycan modification of SELPLG and PODXL2, and tyrosine sulfation modifications of SELPLG. Sulfation on 'Tyr-51' of SELPLG is important for L-selectin binding. Post-translationally, N-glycosylated. As to expression, expressed in B-cell lines and T-lymphocytes.

The protein resides in the cell membrane. Calcium-dependent lectin that mediates cell adhesion by binding to glycoproteins on neighboring cells. Mediates the adherence of lymphocytes to endothelial cells of high endothelial venules in peripheral lymph nodes. Promotes initial tethering and rolling of leukocytes in endothelia. This is L-selectin (SELL) from Homo sapiens (Human).